A 489-amino-acid polypeptide reads, in one-letter code: Cysteine--tRNA ligase (489 aa).

C27 serves as a coordination point for Zn(2+). Positions 29 to 39 (VTVYDLCHLGH) match the 'HIGH' region motif. Zn(2+) contacts are provided by C211, H236, and E240. Positions 268–272 (KMSKS) match the 'KMSKS' region motif. K271 lines the ATP pocket.

The protein belongs to the class-I aminoacyl-tRNA synthetase family. Monomer. It depends on Zn(2+) as a cofactor.

Its subcellular location is the cytoplasm. The catalysed reaction is tRNA(Cys) + L-cysteine + ATP = L-cysteinyl-tRNA(Cys) + AMP + diphosphate. The protein is Cysteine--tRNA ligase of Prochlorococcus marinus (strain AS9601).